A 681-amino-acid polypeptide reads, in one-letter code: Mating-type protein beta1-1 (681 aa).

A DNA-binding region (homeobox; TALE-type) is located at residues 165–227 (DKNEPTSPTP…DARRRIGWNE (63 aa)). Residues 307–318 (LKNDEARRKREA) are compositionally biased toward basic and acidic residues. Disordered regions lie at residues 307–341 (LKND…SPAS), 353–381 (AIDS…SPLC), and 394–466 (SPVK…SDPF). The segment covering 413–430 (TSAAPSPQPSLLPKLTPT) has biased composition (low complexity).

The protein belongs to the TALE/M-ATYP homeobox family. In terms of assembly, may dimerize.

It is found in the nucleus. Has a major regulatory role in sexual and asexual development. It may bind DNA itself or it may have a role in preventing DNA-binding of another protein. The polypeptide is Mating-type protein beta1-1 (Coprinopsis cinerea (Inky cap fungus)).